The primary structure comprises 151 residues: S-ribosylhomocysteine lyase (151 aa).

The Fe cation site is built by histidine 54, histidine 58, and cysteine 121.

Belongs to the LuxS family. Homodimer. Fe cation serves as cofactor.

It carries out the reaction S-(5-deoxy-D-ribos-5-yl)-L-homocysteine = (S)-4,5-dihydroxypentane-2,3-dione + L-homocysteine. Functionally, involved in the synthesis of autoinducer 2 (AI-2) which is secreted by bacteria and is used to communicate both the cell density and the metabolic potential of the environment. The regulation of gene expression in response to changes in cell density is called quorum sensing. Catalyzes the transformation of S-ribosylhomocysteine (RHC) to homocysteine (HC) and 4,5-dihydroxy-2,3-pentadione (DPD). This is S-ribosylhomocysteine lyase from Clostridium botulinum (strain Alaska E43 / Type E3).